The primary structure comprises 387 residues: UDP-N-acetylglucosamine--N-acetylmuramyl-(pentapeptide) pyrophosphoryl-undecaprenol N-acetylglucosamine transferase (387 aa).

Residues 14–16 (TGG), Asn-124, Arg-167, Ser-195, and Gln-296 each bind UDP-N-acetyl-alpha-D-glucosamine. Positions 366-387 (LPQQNSIEEDSTFEKNQEGAVA) are disordered. A compositionally biased stretch (basic and acidic residues) spans 377 to 387 (TFEKNQEGAVA).

The protein belongs to the glycosyltransferase 28 family. MurG subfamily.

It is found in the cell inner membrane. The catalysed reaction is di-trans,octa-cis-undecaprenyl diphospho-N-acetyl-alpha-D-muramoyl-L-alanyl-D-glutamyl-meso-2,6-diaminopimeloyl-D-alanyl-D-alanine + UDP-N-acetyl-alpha-D-glucosamine = di-trans,octa-cis-undecaprenyl diphospho-[N-acetyl-alpha-D-glucosaminyl-(1-&gt;4)]-N-acetyl-alpha-D-muramoyl-L-alanyl-D-glutamyl-meso-2,6-diaminopimeloyl-D-alanyl-D-alanine + UDP + H(+). The protein operates within cell wall biogenesis; peptidoglycan biosynthesis. Cell wall formation. Catalyzes the transfer of a GlcNAc subunit on undecaprenyl-pyrophosphoryl-MurNAc-pentapeptide (lipid intermediate I) to form undecaprenyl-pyrophosphoryl-MurNAc-(pentapeptide)GlcNAc (lipid intermediate II). The polypeptide is UDP-N-acetylglucosamine--N-acetylmuramyl-(pentapeptide) pyrophosphoryl-undecaprenol N-acetylglucosamine transferase (Zymomonas mobilis subsp. mobilis (strain ATCC 31821 / ZM4 / CP4)).